Reading from the N-terminus, the 332-residue chain is Transcription initiation factor IIB 2 (332 aa).

Over residues 1–10 (MSDTITTRTY) the composition is skewed to polar residues. Residues 1-36 (MSDTITTRTYSADAKSRDVRPRESERDETQQDETQV) are disordered. The span at 14–29 (AKSRDVRPRESERDET) shows a compositional bias: basic and acidic residues. A TFIIB-type zinc finger spans residues 33–63 (ETQVCPECSGHLVTDEEHGETICEDCGLVVE). Zn(2+) contacts are provided by C37, C40, C55, and C58. The disordered stretch occupies residues 77–106 (DSAERDSKSRVGAPTTKMMHDKGLSTNIGW). 2 consecutive repeat copies span residues 149–232 (GEID…VREL) and 243–324 (QYVP…ELLE).

The protein belongs to the TFIIB family.

In terms of biological role, stabilizes TBP binding to an archaeal box-A promoter. Also responsible for recruiting RNA polymerase II to the pre-initiation complex (DNA-TBP-TFIIB). The polypeptide is Transcription initiation factor IIB 2 (Haloferax volcanii (strain ATCC 29605 / DSM 3757 / JCM 8879 / NBRC 14742 / NCIMB 2012 / VKM B-1768 / DS2) (Halobacterium volcanii)).